Consider the following 173-residue polypeptide: Mesogenin-1 (173 aa).

Positions 39–68 are enriched in polar residues; it reads ESYSLSQTPSPQSVSPAASYESTYSSSPHT. Disordered regions lie at residues 39-69 and 96-117; these read ESYS…PHTG and TKKD…ASER. Residues 99 to 114 are compositionally biased toward basic residues; it reads DHGHKTSMTTHRRRKA. Residues 109–163 enclose the bHLH domain; sequence HRRRKASEREKLRMRAIAEALHTLRNNLPPMYSQGRQPLTKIQTLKCTINYISEL.

Its subcellular location is the nucleus. Its function is as follows. Involved in specifying the paraxial, but not dorsal, mesoderm. May regulate the expression of T-box transcription factors required for mesoderm formation and differentiation, such as brachyury T, wnt8, vegt and eomes. This is Mesogenin-1 (msgn1) from Xenopus laevis (African clawed frog).